Consider the following 545-residue polypeptide: Chaperonin GroEL 2 (545 aa).

ATP-binding positions include 29–32 (TLGP), 86–90 (DGTTT), G413, 477–479 (DAA), and D493. The interval 526–545 (PEPAAAGHGHGHGHQHGPGF) is disordered. The span at 534 to 545 (GHGHGHQHGPGF) shows a compositional bias: basic residues.

This sequence belongs to the chaperonin (HSP60) family. As to quaternary structure, forms a cylinder of 14 subunits composed of two heptameric rings stacked back-to-back. Interacts with the co-chaperonin GroES.

The protein localises to the cytoplasm. The enzyme catalyses ATP + H2O + a folded polypeptide = ADP + phosphate + an unfolded polypeptide.. Its function is as follows. Together with its co-chaperonin GroES, plays an essential role in assisting protein folding. The GroEL-GroES system forms a nano-cage that allows encapsulation of the non-native substrate proteins and provides a physical environment optimized to promote and accelerate protein folding. The protein is Chaperonin GroEL 2 of Salinispora arenicola (strain CNS-205).